Here is an 81-residue protein sequence, read N- to C-terminus: Putative membrane protein insertion efficiency factor (81 aa).

It belongs to the UPF0161 family.

It localises to the cell membrane. In terms of biological role, could be involved in insertion of integral membrane proteins into the membrane. This chain is Putative membrane protein insertion efficiency factor, found in Geobacillus kaustophilus (strain HTA426).